Here is a 366-residue protein sequence, read N- to C-terminus: Ribosomal RNA large subunit methyltransferase M (366 aa).

Residues S188, 221–224 (CPGG), D240, D260, and D277 each bind S-adenosyl-L-methionine. The active-site Proton acceptor is K306.

The protein belongs to the class I-like SAM-binding methyltransferase superfamily. RNA methyltransferase RlmE family. RlmM subfamily. Monomer.

It is found in the cytoplasm. The catalysed reaction is cytidine(2498) in 23S rRNA + S-adenosyl-L-methionine = 2'-O-methylcytidine(2498) in 23S rRNA + S-adenosyl-L-homocysteine + H(+). In terms of biological role, catalyzes the 2'-O-methylation at nucleotide C2498 in 23S rRNA. This Photorhabdus asymbiotica subsp. asymbiotica (strain ATCC 43949 / 3105-77) (Xenorhabdus luminescens (strain 2)) protein is Ribosomal RNA large subunit methyltransferase M.